Reading from the N-terminus, the 100-residue chain is MYB-like transcription factor TCL2 (100 aa).

In terms of domain architecture, Myb-like spans 37–74; sequence TEQEEDLIFRMHRLVGDRWDLIAGRVVGREAKDIERYW.

As to quaternary structure, interacts with GL3. In terms of tissue distribution, expressed in cotyledons, petioles, rosette leaves, hydathodes, cauline leaves, stems, pedicels and flower buds.

Its subcellular location is the nucleus. Functionally, MYB-type transcription factor involved in trichome cell specification. Acts as a negative regulator of trichome patterning and formation. May function by suppressing the expression of GL3. In Arabidopsis thaliana (Mouse-ear cress), this protein is MYB-like transcription factor TCL2 (TCL2).